The primary structure comprises 323 residues: Biotin synthase (323 aa).

One can recognise a Radical SAM core domain in the interval 46–264; that stretch reads TEIQLSSLLS…IAVARITMPR (219 aa). The [4Fe-4S] cluster site is built by C61, C65, and C68. [2Fe-2S] cluster contacts are provided by C105, C136, C196, and R268.

Belongs to the radical SAM superfamily. Biotin synthase family. As to quaternary structure, homodimer. [4Fe-4S] cluster serves as cofactor. [2Fe-2S] cluster is required as a cofactor.

It catalyses the reaction (4R,5S)-dethiobiotin + (sulfur carrier)-SH + 2 reduced [2Fe-2S]-[ferredoxin] + 2 S-adenosyl-L-methionine = (sulfur carrier)-H + biotin + 2 5'-deoxyadenosine + 2 L-methionine + 2 oxidized [2Fe-2S]-[ferredoxin]. It participates in cofactor biosynthesis; biotin biosynthesis; biotin from 7,8-diaminononanoate: step 2/2. Catalyzes the conversion of dethiobiotin (DTB) to biotin by the insertion of a sulfur atom into dethiobiotin via a radical-based mechanism. This Bordetella avium (strain 197N) protein is Biotin synthase.